Consider the following 490-residue polypeptide: Betaine aldehyde dehydrogenase (490 aa).

Residues I27 and D93 each contribute to the K(+) site. 150–152 serves as a coordination point for NAD(+); the sequence is GAW. K162 acts as the Charge relay system in catalysis. 176-179 is an NAD(+) binding site; the sequence is KPSE. Residue V180 participates in K(+) binding. 230–233 provides a ligand contact to NAD(+); sequence GTTT. L246 provides a ligand contact to K(+). Catalysis depends on E252, which acts as the Proton acceptor. G254, C286, and E387 together coordinate NAD(+). Residue C286 is the Nucleophile of the active site. C286 is subject to Cysteine sulfenic acid (-SOH). 2 residues coordinate K(+): K457 and G460. Residue E464 is the Charge relay system of the active site.

Belongs to the aldehyde dehydrogenase family. In terms of assembly, dimer of dimers. The cofactor is K(+).

It carries out the reaction betaine aldehyde + NAD(+) + H2O = glycine betaine + NADH + 2 H(+). The protein operates within amine and polyamine biosynthesis; betaine biosynthesis via choline pathway; betaine from betaine aldehyde: step 1/1. Its function is as follows. Involved in the biosynthesis of the osmoprotectant glycine betaine. Catalyzes the irreversible oxidation of betaine aldehyde to the corresponding acid. The polypeptide is Betaine aldehyde dehydrogenase (Pseudomonas putida (strain W619)).